A 595-amino-acid polypeptide reads, in one-letter code: Putative terpenoid synthase 16 (595 aa).

Residues Asp349, Asp353, Asn494, and Asp502 each contribute to the Mg(2+) site. The DDXXD motif signature appears at 349-353 (DDTCD).

It belongs to the terpene synthase family. Tpsa subfamily. Mg(2+) is required as a cofactor. It depends on Mn(2+) as a cofactor.

The protein localises to the cytoplasm. It functions in the pathway secondary metabolite biosynthesis; terpenoid biosynthesis. The chain is Putative terpenoid synthase 16 (TPS16) from Arabidopsis thaliana (Mouse-ear cress).